Consider the following 385-residue polypeptide: 1-deoxy-D-xylulose 5-phosphate reductoisomerase 1 (385 aa).

Positions 11, 12, 13, 14, 39, and 122 each coordinate NADPH. Lysine 123 lines the 1-deoxy-D-xylulose 5-phosphate pocket. Glutamate 124 lines the NADPH pocket. A Mn(2+)-binding site is contributed by aspartate 148. Residues serine 149, glutamate 150, serine 174, and histidine 197 each contribute to the 1-deoxy-D-xylulose 5-phosphate site. Mn(2+) is bound at residue glutamate 150. Position 203 (glycine 203) interacts with NADPH. Residues serine 210, asparagine 215, lysine 216, and glutamate 219 each coordinate 1-deoxy-D-xylulose 5-phosphate. Mn(2+) is bound at residue glutamate 219.

Belongs to the DXR family. Mg(2+) serves as cofactor. It depends on Mn(2+) as a cofactor.

The catalysed reaction is 2-C-methyl-D-erythritol 4-phosphate + NADP(+) = 1-deoxy-D-xylulose 5-phosphate + NADPH + H(+). It participates in isoprenoid biosynthesis; isopentenyl diphosphate biosynthesis via DXP pathway; isopentenyl diphosphate from 1-deoxy-D-xylulose 5-phosphate: step 1/6. Its function is as follows. Catalyzes the NADPH-dependent rearrangement and reduction of 1-deoxy-D-xylulose-5-phosphate (DXP) to 2-C-methyl-D-erythritol 4-phosphate (MEP). This Bacillus cereus (strain ATCC 14579 / DSM 31 / CCUG 7414 / JCM 2152 / NBRC 15305 / NCIMB 9373 / NCTC 2599 / NRRL B-3711) protein is 1-deoxy-D-xylulose 5-phosphate reductoisomerase 1.